We begin with the raw amino-acid sequence, 226 residues long: Protein DVU_0532 (226 aa).

6 helical membrane-spanning segments follow: residues 1–23 (MYAF…GLLA), 46–57 (AIGLQGAVQSAL), 73–99 (FFTV…NVIL), 112–131 (MGVA…MIAL), 141–164 (ILTT…GFLA), and 194–222 (LSHI…TRGP).

Requires heme b as cofactor.

The protein localises to the cell membrane. Functionally, HMWC (high-molecular-weight cytochrome c), ORF2, ORF3, ORF4, ORF5 and ORF6 in the HMC operon form a transmembrane protein complex that allows electron flow from the periplasmic hydrogenase to the cytoplasmic enzymes that catalyze reduction of sulfates. This is Protein DVU_0532 from Nitratidesulfovibrio vulgaris (strain ATCC 29579 / DSM 644 / CCUG 34227 / NCIMB 8303 / VKM B-1760 / Hildenborough) (Desulfovibrio vulgaris).